The following is a 103-amino-acid chain: MYALVEINGKQYKAIEGEFLKIDKISPIEKDKLEFNSVLLINKDGEIKIGKPYVANSLIRCTYKEDKKDKKVVSYRYRRRKSSERKVGHRQTYSYILVDEIVF.

This sequence belongs to the bacterial ribosomal protein bL21 family. As to quaternary structure, part of the 50S ribosomal subunit. Contacts protein L20.

Its function is as follows. This protein binds to 23S rRNA in the presence of protein L20. The polypeptide is Large ribosomal subunit protein bL21 (Borrelia garinii subsp. bavariensis (strain ATCC BAA-2496 / DSM 23469 / PBi) (Borreliella bavariensis)).